A 250-amino-acid polypeptide reads, in one-letter code: 5'-nucleotidase SurE (250 aa).

A divalent metal cation-binding residues include aspartate 8, aspartate 9, serine 39, and asparagine 91.

Belongs to the SurE nucleotidase family. The cofactor is a divalent metal cation.

It localises to the cytoplasm. The catalysed reaction is a ribonucleoside 5'-phosphate + H2O = a ribonucleoside + phosphate. Nucleotidase that shows phosphatase activity on nucleoside 5'-monophosphates. This chain is 5'-nucleotidase SurE, found in Leptospira interrogans serogroup Icterohaemorrhagiae serovar copenhageni (strain Fiocruz L1-130).